Here is a 492-residue protein sequence, read N- to C-terminus: Bifunctional purine biosynthesis protein PurH (492 aa).

The MGS-like domain maps to 1 to 144; that stretch reads MKKAILSVSN…KNYKHVTTIV (144 aa).

The protein belongs to the PurH family.

The enzyme catalyses (6R)-10-formyltetrahydrofolate + 5-amino-1-(5-phospho-beta-D-ribosyl)imidazole-4-carboxamide = 5-formamido-1-(5-phospho-D-ribosyl)imidazole-4-carboxamide + (6S)-5,6,7,8-tetrahydrofolate. It catalyses the reaction IMP + H2O = 5-formamido-1-(5-phospho-D-ribosyl)imidazole-4-carboxamide. It participates in purine metabolism; IMP biosynthesis via de novo pathway; 5-formamido-1-(5-phospho-D-ribosyl)imidazole-4-carboxamide from 5-amino-1-(5-phospho-D-ribosyl)imidazole-4-carboxamide (10-formyl THF route): step 1/1. The protein operates within purine metabolism; IMP biosynthesis via de novo pathway; IMP from 5-formamido-1-(5-phospho-D-ribosyl)imidazole-4-carboxamide: step 1/1. This Staphylococcus aureus (strain JH1) protein is Bifunctional purine biosynthesis protein PurH.